A 507-amino-acid polypeptide reads, in one-letter code: Peroxisomal catalase (507 aa).

Active-site residues include His-65 and Asn-138. Tyr-348 is a binding site for heme. The Microbody targeting signal motif lies at 505 to 507 (SKI).

It belongs to the catalase family. Homotetramer. Requires heme as cofactor.

The protein resides in the peroxisome matrix. The catalysed reaction is 2 H2O2 = O2 + 2 H2O. In terms of biological role, catalyzes the degradation of hydrogen peroxide (H(2)O(2)) generated by peroxisomal oxidases to water and oxygen, thereby protecting cells from the toxic effects of hydrogen peroxide. This is Peroxisomal catalase (PXP9) from Pichia angusta (Yeast).